A 95-amino-acid polypeptide reads, in one-letter code: Co-chaperonin GroES (95 aa).

The protein belongs to the GroES chaperonin family. In terms of assembly, heptamer of 7 subunits arranged in a ring. Interacts with the chaperonin GroEL.

The protein localises to the cytoplasm. Functionally, together with the chaperonin GroEL, plays an essential role in assisting protein folding. The GroEL-GroES system forms a nano-cage that allows encapsulation of the non-native substrate proteins and provides a physical environment optimized to promote and accelerate protein folding. GroES binds to the apical surface of the GroEL ring, thereby capping the opening of the GroEL channel. This is Co-chaperonin GroES from Xanthomonas axonopodis pv. citri (strain 306).